Here is a 247-residue protein sequence, read N- to C-terminus: ATP synthase subunit a, chloroplastic (247 aa).

5 helical membrane passes run 38–58, 95–115, 134–154, 199–219, and 220–240; these read QVLI…TVAV, VPFI…GALL, INTT…AGLT, LVVV…VMFL, and GLFT…AYIG.

The protein belongs to the ATPase A chain family. F-type ATPases have 2 components, CF(1) - the catalytic core - and CF(0) - the membrane proton channel. CF(1) has five subunits: alpha(3), beta(3), gamma(1), delta(1), epsilon(1). CF(0) has four main subunits: a, b, b' and c.

It is found in the plastid. It localises to the chloroplast thylakoid membrane. Functionally, key component of the proton channel; it plays a direct role in the translocation of protons across the membrane. This is ATP synthase subunit a, chloroplastic from Platanus occidentalis (Sycamore).